We begin with the raw amino-acid sequence, 276 residues long: Pantothenate synthetase (276 aa).

27 to 34 lines the ATP pocket; that stretch reads MGALHKGH. Histidine 34 acts as the Proton donor in catalysis. Residue glutamine 58 participates in (R)-pantoate binding. Glutamine 58 contacts beta-alanine. 147–150 is a binding site for ATP; that stretch reads GKKD. Glutamine 153 is a (R)-pantoate binding site. Residues valine 176 and 184-187 contribute to the ATP site; that span reads LSSR.

It belongs to the pantothenate synthetase family. As to quaternary structure, homodimer.

It localises to the cytoplasm. It catalyses the reaction (R)-pantoate + beta-alanine + ATP = (R)-pantothenate + AMP + diphosphate + H(+). The protein operates within cofactor biosynthesis; (R)-pantothenate biosynthesis; (R)-pantothenate from (R)-pantoate and beta-alanine: step 1/1. Catalyzes the condensation of pantoate with beta-alanine in an ATP-dependent reaction via a pantoyl-adenylate intermediate. This chain is Pantothenate synthetase, found in Helicobacter pylori (strain ATCC 700392 / 26695) (Campylobacter pylori).